The sequence spans 221 residues: NIP3 homolog (221 aa).

Residues 24–55 form a disordered region; that stretch reads GEKTDESVQPQQQTEQSSAQQTTPSAKAVSNP. A Glycyl lysine isopeptide (Lys-Gly) (interchain with G-Cter in ubiquitin) cross-link involves residue lysine 26. A compositionally biased stretch (low complexity) spans 32–49; the sequence is QPQQQTEQSSAQQTTPSA. A helical membrane pass occupies residues 189–209; the sequence is VVFGFLVTNIFSFVVGAAVGF. The required for initiation of apoptosis stretch occupies residues 189-209; sequence VVFGFLVTNIFSFVVGAAVGF.

This sequence belongs to the NIP3 family. In terms of assembly, homodimer; via transmembrane domain. Interacts with ced-3 and ced-9. Ubiquitinated and degraded by the proteasome. Under oxidative stress conditions, ubiquitinated at Lys-26 in a pink-1 dependent manner. Colocalizes with pdr-1 and may be ubiquitinated by it. As to expression, expressed in all somatic tissues including neurons, pharynx, intestine, body wall muscles and vulva muscles.

The protein resides in the mitochondrion outer membrane. Functionally, initiates apoptosis in a BH3-independent mechanism possibly by recruiting ced-3 to mitochondria and other cytoplasmic membranes. Has a role in lifespan and tumor growth. Required for the induction of mitophagy under stress conditions. The sequence is that of NIP3 homolog from Caenorhabditis elegans.